The chain runs to 116 residues: NADH-ubiquinone oxidoreductase chain 3 (116 aa).

3 helical membrane-spanning segments follow: residues 3 to 23, 56 to 76, and 87 to 107; these read LIMT…TVSF, FFLV…LLPL, and GTFF…IYEW.

It belongs to the complex I subunit 3 family.

The protein resides in the mitochondrion membrane. The enzyme catalyses a ubiquinone + NADH + 5 H(+)(in) = a ubiquinol + NAD(+) + 4 H(+)(out). Functionally, core subunit of the mitochondrial membrane respiratory chain NADH dehydrogenase (Complex I) that is believed to belong to the minimal assembly required for catalysis. Complex I functions in the transfer of electrons from NADH to the respiratory chain. The immediate electron acceptor for the enzyme is believed to be ubiquinone. The sequence is that of NADH-ubiquinone oxidoreductase chain 3 (MT-ND3) from Cyprinus carpio (Common carp).